The following is a 135-amino-acid chain: Protein PsiE homolog (135 aa).

Transmembrane regions (helical) follow at residues 14-34 (LQTILNIGLLVLATILVIFLV), 54-74 (YQLIEGIVIYFLYFEFIALIV), 82-102 (HFPLRYFIYIGITAIIRLIIV), and 107-127 (PSDTLMYSAAILLLVVTLYLA).

Belongs to the PsiE family.

The protein resides in the cell inner membrane. This chain is Protein PsiE homolog, found in Pectobacterium carotovorum subsp. carotovorum (strain PC1).